Reading from the N-terminus, the 753-residue chain is 5-methyltetrahydropteroyltriglutamate--homocysteine methyltransferase (753 aa).

Residues 17-20 and Lys-117 contribute to the 5-methyltetrahydropteroyltri-L-glutamate site; that span reads RELK. L-homocysteine contacts are provided by residues 431-433 and Glu-484; that span reads IGS. Residues 431–433 and Glu-484 contribute to the L-methionine site; that span reads IGS. 5-methyltetrahydropteroyltri-L-glutamate-binding positions include 515–516 and Trp-561; that span reads RC. L-homocysteine is bound at residue Asp-599. Position 599 (Asp-599) interacts with L-methionine. Glu-605 provides a ligand contact to 5-methyltetrahydropteroyltri-L-glutamate. Positions 641, 643, and 665 each coordinate Zn(2+). His-694 acts as the Proton donor in catalysis. A Zn(2+)-binding site is contributed by Cys-726.

Belongs to the vitamin-B12 independent methionine synthase family. Zn(2+) is required as a cofactor.

The enzyme catalyses 5-methyltetrahydropteroyltri-L-glutamate + L-homocysteine = tetrahydropteroyltri-L-glutamate + L-methionine. It functions in the pathway amino-acid biosynthesis; L-methionine biosynthesis via de novo pathway; L-methionine from L-homocysteine (MetE route): step 1/1. Its function is as follows. Catalyzes the transfer of a methyl group from 5-methyltetrahydrofolate to homocysteine resulting in methionine formation. The sequence is that of 5-methyltetrahydropteroyltriglutamate--homocysteine methyltransferase from Cronobacter sakazakii (strain ATCC BAA-894) (Enterobacter sakazakii).